Reading from the N-terminus, the 275-residue chain is Large ribosomal subunit protein uL2 (275 aa).

Disordered stretches follow at residues 24 to 54 (LYKG…VRHQ) and 223 to 275 (VAMN…RHKR). Basic and acidic residues-rich tracts occupy residues 25–38 (YKGR…EKKT) and 229–241 (DHPH…RTGE).

Belongs to the universal ribosomal protein uL2 family. As to quaternary structure, part of the 50S ribosomal subunit. Forms a bridge to the 30S subunit in the 70S ribosome.

Functionally, one of the primary rRNA binding proteins. Required for association of the 30S and 50S subunits to form the 70S ribosome, for tRNA binding and peptide bond formation. It has been suggested to have peptidyltransferase activity; this is somewhat controversial. Makes several contacts with the 16S rRNA in the 70S ribosome. This Azoarcus sp. (strain BH72) protein is Large ribosomal subunit protein uL2.